A 370-amino-acid polypeptide reads, in one-letter code: Protein-glutamate methylesterase/protein-glutamine glutaminase of group 1 operon (370 aa).

One can recognise a Response regulatory domain in the interval 4–121; that stretch reads KVLVVDDSGF…SRNPDKVKQL (118 aa). 4-aspartylphosphate is present on Asp55. A compositionally biased stretch (low complexity) spans 150-180; that stretch reads PASTFTSQAQTRPAAPARAAAPTPAASQSPA. The segment at 150 to 183 is disordered; that stretch reads PASTFTSQAQTRPAAPARAAAPTPAASQSPAPKR. A CheB-type methylesterase domain is found at 179 to 370; sequence PAPKRKPYKL…IGKHLVEACV (192 aa). Residues Ser194, His221, and Asp314 contribute to the active site.

It belongs to the CheB family. In terms of processing, phosphorylated by CheA. Phosphorylation of the N-terminal regulatory domain activates the methylesterase activity.

The protein resides in the cytoplasm. It catalyses the reaction [protein]-L-glutamate 5-O-methyl ester + H2O = L-glutamyl-[protein] + methanol + H(+). The catalysed reaction is L-glutaminyl-[protein] + H2O = L-glutamyl-[protein] + NH4(+). In terms of biological role, involved in chemotaxis. Part of a chemotaxis signal transduction system that modulates chemotaxis in response to various stimuli. Catalyzes the demethylation of specific methylglutamate residues introduced into the chemoreceptors (methyl-accepting chemotaxis proteins or MCP) by CheR. Also mediates the irreversible deamidation of specific glutamine residues to glutamic acid. This Pseudomonas putida (strain ATCC 47054 / DSM 6125 / CFBP 8728 / NCIMB 11950 / KT2440) protein is Protein-glutamate methylesterase/protein-glutamine glutaminase of group 1 operon.